We begin with the raw amino-acid sequence, 377 residues long: 5-hydroxytryptamine receptor 1D (377 aa).

Asn5, Asn17, and Asn21 each carry an N-linked (GlcNAc...) asparagine glycan. The next 3 helical transmembrane spans lie at 39–64 (ISLAVVLSIITVATVLSNTFVLTTIL), 76–97 (LIGSLATTDLLVSILVMPISIA), and 110–134 (LCDIWVSSDITCCTASILHLCVIAL). A disulfide bridge links Cys111 with Cys188. Positions 118 and 122 each coordinate serotonin. The short motif at 135-137 (DRY) is the DRY motif; important for ligand-induced conformation changes element. The next 4 helical transmembrane spans lie at 155 to 176 (AAAMIAVVWAISICISIPPLFW), 195 to 218 (ISYTIYSTCGAFYIPSVLLIVLYG), 301 to 326 (KTLGIILGAFIGCWLPFFVASLVLPI), and 336 to 359 (GLFDFFTWLGYLNSLINPIIYTVF). Ser321 contributes to the serotonin binding site. The NPxxY motif; important for ligand-induced conformation changes and signaling motif lies at 352-356 (NPIIY).

It belongs to the G-protein coupled receptor 1 family. As to quaternary structure, homodimer. Heterodimer with HTR1B.

The protein localises to the cell membrane. Its function is as follows. G-protein coupled receptor for 5-hydroxytryptamine (serotonin). Also functions as a receptor for ergot alkaloid derivatives, various anxiolytic and antidepressant drugs and other psychoactive substances. Ligand binding causes a conformation change that triggers signaling via guanine nucleotide-binding proteins (G proteins) and modulates the activity of downstream effectors, such as adenylate cyclase. HTR1D is coupled to G(i)/G(o) G alpha proteins and mediates inhibitory neurotransmission by inhibiting adenylate cyclase activity. Regulates the release of 5-hydroxytryptamine in the brain, and thereby affects neural activity. May also play a role in regulating the release of other neurotransmitters. May play a role in vasoconstriction. The chain is 5-hydroxytryptamine receptor 1D (HTR1D) from Oryctolagus cuniculus (Rabbit).